An 89-amino-acid chain; its full sequence is uncharacterized protein (89 aa).

This is an uncharacterized protein from Vaccinia virus (strain Copenhagen) (VACV).